The chain runs to 230 residues: RNA polymerase sigma factor FliA (230 aa).

The interval 6–78 is sigma-70 factor domain-2; the sequence is LWQRYVPLVR…MLDELRSRDW (73 aa). An Interaction with polymerase core subunit RpoC motif is present at residues 33-36; it reads DLLQ. Residues 86-156 are sigma-70 factor domain-3; that stretch reads NAREVASAMQ…VEPMLEGHED (71 aa). The segment at 175–223 is sigma-70 factor domain-4; that stretch reads AIEALPEREKMVLTLYYQEELNLKEIGAVLEVGESRVSQLHSQAIKRLR. The H-T-H motif DNA-binding region spans 197-216; sequence LKEIGAVLEVGESRVSQLHS.

It belongs to the sigma-70 factor family. FliA subfamily.

The protein localises to the cytoplasm. Functionally, sigma factors are initiation factors that promote the attachment of RNA polymerase to specific initiation sites and are then released. This sigma factor controls the expression of flagella-related genes. The protein is RNA polymerase sigma factor FliA of Yersinia enterocolitica.